We begin with the raw amino-acid sequence, 445 residues long: mRNA cleavage and polyadenylation factor CLP1 (445 aa).

ATP-binding positions include Glu-33 and 131–136 (SSGKTS).

It belongs to the Clp1 family. Clp1 subfamily. Component of a pre-mRNA cleavage factor complex. Interacts directly with PCF11.

The protein resides in the nucleus. In terms of biological role, required for endonucleolytic cleavage during polyadenylation-dependent pre-mRNA 3'-end formation. The sequence is that of mRNA cleavage and polyadenylation factor CLP1 from Eremothecium gossypii (strain ATCC 10895 / CBS 109.51 / FGSC 9923 / NRRL Y-1056) (Yeast).